Here is a 312-residue protein sequence, read N- to C-terminus: Ribosomal protein L11 methyltransferase (312 aa).

S-adenosyl-L-methionine-binding residues include threonine 163, glycine 184, aspartate 206, and asparagine 248.

It belongs to the methyltransferase superfamily. PrmA family.

It localises to the cytoplasm. It catalyses the reaction L-lysyl-[protein] + 3 S-adenosyl-L-methionine = N(6),N(6),N(6)-trimethyl-L-lysyl-[protein] + 3 S-adenosyl-L-homocysteine + 3 H(+). Methylates ribosomal protein L11. This Clostridium botulinum (strain 657 / Type Ba4) protein is Ribosomal protein L11 methyltransferase.